Here is a 185-residue protein sequence, read N- to C-terminus: Ribosome-recycling factor (185 aa).

It belongs to the RRF family.

The protein resides in the cytoplasm. Responsible for the release of ribosomes from messenger RNA at the termination of protein biosynthesis. May increase the efficiency of translation by recycling ribosomes from one round of translation to another. The sequence is that of Ribosome-recycling factor from Lactococcus lactis subsp. lactis (strain IL1403) (Streptococcus lactis).